A 743-amino-acid polypeptide reads, in one-letter code: Glycerol-3-phosphate O-acyltransferase 2 (743 aa).

Topologically, residues Met-1 to Asn-34 are lumenal. Residues Ile-35–Phe-55 traverse the membrane as a helical segment. Residues Arg-56–Val-442 are Cytoplasmic-facing. The chain crosses the membrane as a helical span at residues Thr-443–Leu-457. Position 458 (Ser-458) is a topological domain, lumenal. Residues Leu-459–Arg-473 form a helical membrane-spanning segment. Residues Val-474–Lys-501 are Cytoplasmic-facing. The helical transmembrane segment at Leu-502 to Ile-522 threads the bilayer. Residues Leu-523 to Arg-531 are Lumenal-facing. Residues Ile-532–Phe-552 traverse the membrane as a helical segment. Over Thr-553 to Glu-743 the chain is Cytoplasmic. Ser-632, Ser-637, Ser-647, Ser-651, Ser-654, Ser-657, Ser-664, Ser-668, and Ser-671 each carry phosphoserine. Thr-673 bears the Phosphothreonine mark. The interval Lys-682–Glu-743 is disordered. At Ser-688 the chain carries Phosphoserine. A compositionally biased stretch (acidic residues) spans Glu-691–Asp-700. Position 692 is a phosphothreonine (Thr-692). Residue Ser-693 is modified to Phosphoserine.

Belongs to the GPAT/DAPAT family. Post-translationally, phosphorylated at a conserved motif involving Ser-664, Ser-668 and Ser-671. This phosphorylation plays a critical role for efficient TAG mobilization. Phosphorylation deficiency at this motif increases the enzyme activity and consequently induces de novo formation of phosphatidic acid.

It localises to the lipid droplet. The protein localises to the endoplasmic reticulum membrane. It carries out the reaction sn-glycerol 3-phosphate + an acyl-CoA = a 1-acyl-sn-glycero-3-phosphate + CoA. The catalysed reaction is dihydroxyacetone phosphate + an acyl-CoA = a 1-acylglycerone 3-phosphate + CoA. The enzyme catalyses sn-glycerol 3-phosphate + hexadecanoyl-CoA = 1-hexadecanoyl-sn-glycero-3-phosphate + CoA. It catalyses the reaction (9Z)-hexadecenoyl-CoA + sn-glycerol 3-phosphate = 1-(9Z-hexadecenoyl)-sn-glycero-3-phosphate + CoA. It carries out the reaction sn-glycerol 3-phosphate + octadecanoyl-CoA = 1-octadecanoyl-sn-glycero-3-phosphate + CoA. The catalysed reaction is sn-glycerol 3-phosphate + (9Z)-octadecenoyl-CoA = 1-(9Z-octadecenoyl)-sn-glycero-3-phosphate + CoA. The protein operates within phospholipid metabolism; CDP-diacylglycerol biosynthesis; CDP-diacylglycerol from sn-glycerol 3-phosphate: step 1/3. Dual substrate-specific glycerol-3-phosphate/dihydroxyacetone phosphate sn-1 acyltransferase, catalyzing the first and committed reaction in the de novo synthesis of glycerophospholipids and triacylglycerols (TAGs). Can use both Gly-3-P and dihydroxyacetone phosphate with similar efficiencies and has a broad fatty acyl-CoA specificity profile. Transfers a fatty acid from fatty acyl-CoA to the sn-1 position of glycerol-3-phosphate to produce lysophosphatidic acid (LysoPA). These lipids not only are precursors of glycerolipids, but also are dynamic components of signal transduction systems that control cell physiology. This Saccharomyces cerevisiae (strain ATCC 204508 / S288c) (Baker's yeast) protein is Glycerol-3-phosphate O-acyltransferase 2 (GPT2).